Reading from the N-terminus, the 152-residue chain is Acidic phospholipase A2 S17-58 (152 aa).

The N-terminal stretch at 1–19 (MYPAHLLVLLAVCVSLLGA) is a signal peptide. Residues 20–27 (SNIPLPSL) constitute a propeptide that is removed on maturation. Cystine bridges form between C38–C104, C54–C151, C56–C72, C71–C132, C78–C125, C88–C118, and C111–C123. Y55, G57, and G59 together coordinate Ca(2+). H75 is a catalytic residue. D76 provides a ligand contact to Ca(2+). D126 is an active-site residue.

The protein belongs to the phospholipase A2 family. Group I subfamily. D49 sub-subfamily. Ca(2+) is required as a cofactor. Expressed by the venom gland.

It localises to the secreted. The catalysed reaction is a 1,2-diacyl-sn-glycero-3-phosphocholine + H2O = a 1-acyl-sn-glycero-3-phosphocholine + a fatty acid + H(+). Snake venom phospholipase A2 (PLA2) that inhibits collagen-induced platelet aggregation. PLA2 catalyzes the calcium-dependent hydrolysis of the 2-acyl groups in 3-sn-phosphoglycerides. This Austrelaps superbus (Lowland copperhead snake) protein is Acidic phospholipase A2 S17-58.